Consider the following 322-residue polypeptide: Probable 5-dehydro-4-deoxyglucarate dehydratase 2 (322 aa).

It belongs to the DapA family.

It carries out the reaction 5-dehydro-4-deoxy-D-glucarate + H(+) = 2,5-dioxopentanoate + CO2 + H2O. It participates in carbohydrate acid metabolism; D-glucarate degradation; 2,5-dioxopentanoate from D-glucarate: step 2/2. This chain is Probable 5-dehydro-4-deoxyglucarate dehydratase 2, found in Streptomyces coelicolor (strain ATCC BAA-471 / A3(2) / M145).